Here is a 428-residue protein sequence, read N- to C-terminus: 3-phosphoshikimate 1-carboxyvinyltransferase (428 aa).

Positions 23, 24, and 28 each coordinate 3-phosphoshikimate. Residue Lys-23 coordinates phosphoenolpyruvate. Gly-97 and Arg-125 together coordinate phosphoenolpyruvate. Ser-170, Ser-171, Gln-172, Ser-198, Asp-314, Asn-337, and Lys-341 together coordinate 3-phosphoshikimate. Residue Gln-172 coordinates phosphoenolpyruvate. The active-site Proton acceptor is Asp-314. Arg-345, Arg-387, and Lys-412 together coordinate phosphoenolpyruvate.

The protein belongs to the EPSP synthase family. Monomer.

The protein localises to the cytoplasm. It carries out the reaction 3-phosphoshikimate + phosphoenolpyruvate = 5-O-(1-carboxyvinyl)-3-phosphoshikimate + phosphate. It participates in metabolic intermediate biosynthesis; chorismate biosynthesis; chorismate from D-erythrose 4-phosphate and phosphoenolpyruvate: step 6/7. In terms of biological role, catalyzes the transfer of the enolpyruvyl moiety of phosphoenolpyruvate (PEP) to the 5-hydroxyl of shikimate-3-phosphate (S3P) to produce enolpyruvyl shikimate-3-phosphate and inorganic phosphate. In Cronobacter sakazakii (strain ATCC BAA-894) (Enterobacter sakazakii), this protein is 3-phosphoshikimate 1-carboxyvinyltransferase.